The primary structure comprises 92 residues: Small ribosomal subunit protein uS19 (92 aa).

Belongs to the universal ribosomal protein uS19 family.

Functionally, protein S19 forms a complex with S13 that binds strongly to the 16S ribosomal RNA. The sequence is that of Small ribosomal subunit protein uS19 (rpsS) from Halalkalibacterium halodurans (strain ATCC BAA-125 / DSM 18197 / FERM 7344 / JCM 9153 / C-125) (Bacillus halodurans).